The following is a 136-amino-acid chain: Transcription antitermination protein NusB (136 aa).

This sequence belongs to the NusB family.

In terms of biological role, involved in transcription antitermination. Required for transcription of ribosomal RNA (rRNA) genes. Binds specifically to the boxA antiterminator sequence of the ribosomal RNA (rrn) operons. This is Transcription antitermination protein NusB from Salinispora arenicola (strain CNS-205).